Here is a 212-residue protein sequence, read N- to C-terminus: DNA-directed RNA polymerase III subunit RPC8 (212 aa).

Ser-162 is modified (phosphoserine). Basic and acidic residues predominate over residues 166–184 (RELEERAQLENEIEGKNEE). Residues 166-194 (RELEERAQLENEIEGKNEETPQNEKPPAY) are disordered.

This sequence belongs to the eukaryotic RPB7/RPC8 RNA polymerase subunit family. As to quaternary structure, component of the RNA polymerase III (Pol III) complex consisting of 17 subunits. RPC25/RPC8 and RPC17/RPC9 form a Pol III subcomplex.

It is found in the nucleus. In terms of biological role, DNA-dependent RNA polymerase catalyzes the transcription of DNA into RNA using the four ribonucleoside triphosphates as substrates. Specific peripheric component of RNA polymerase III which synthesizes small RNAs, such as 5S rRNA and tRNA. The RPC25/RPC8-RPC17/RPC9 subcomplex may bind Pol III transcripts emerging from the adjacent exit pore during elongation. The sequence is that of DNA-directed RNA polymerase III subunit RPC8 (RPC25) from Saccharomyces cerevisiae (strain ATCC 204508 / S288c) (Baker's yeast).